Reading from the N-terminus, the 91-residue chain is Large ribosomal subunit protein bL27 (91 aa).

Positions 1–22 (MAHKKAGGSSRNGRDSDGRRLG) are disordered.

Belongs to the bacterial ribosomal protein bL27 family.

The chain is Large ribosomal subunit protein bL27 from Beijerinckia indica subsp. indica (strain ATCC 9039 / DSM 1715 / NCIMB 8712).